The chain runs to 387 residues: Cell surface GPI-anchored protein ARB_01627 (387 aa).

The N-terminal stretch at 1-19 (MAITKYLVSALAVAGLAFA) is a signal peptide. N-linked (GlcNAc...) asparagine glycosylation is found at asparagine 73, asparagine 175, asparagine 201, asparagine 206, asparagine 231, asparagine 236, asparagine 253, and asparagine 270. Residues 338–361 (TCRERQEKPKTGDDHSGGDEEGHK) are compositionally biased toward basic and acidic residues. Positions 338-362 (TCRERQEKPKTGDDHSGGDEEGHKG) are disordered. Alanine 364 is lipidated: GPI-anchor amidated alanine. The propeptide at 365–387 (AAFAKAPAAALLIAFVGALQFFL) is removed in mature form.

It belongs to the SPS2 family. In terms of processing, the GPI-anchor is attached to the protein in the endoplasmic reticulum and serves to target the protein to the cell surface. There, the glucosamine-inositol phospholipid moiety is cleaved off and the GPI-modified mannoprotein is covalently attached via its lipidless GPI glycan remnant to the 1,6-beta-glucan of the outer cell wall layer.

Its subcellular location is the cell membrane. It is found in the secreted. The protein resides in the cell wall. Functionally, required for proper cell wall integrity and for the correct assembly of the mannoprotein outer layer of the cell wall. The sequence is that of Cell surface GPI-anchored protein ARB_01627 from Arthroderma benhamiae (strain ATCC MYA-4681 / CBS 112371) (Trichophyton mentagrophytes).